Consider the following 570-residue polypeptide: Formate--tetrahydrofolate ligase (570 aa).

Position 65 to 72 (65 to 72 (TPHGEGKT)) interacts with ATP.

Belongs to the formate--tetrahydrofolate ligase family.

The enzyme catalyses (6S)-5,6,7,8-tetrahydrofolate + formate + ATP = (6R)-10-formyltetrahydrofolate + ADP + phosphate. The protein operates within one-carbon metabolism; tetrahydrofolate interconversion. This is Formate--tetrahydrofolate ligase from Shewanella oneidensis (strain ATCC 700550 / JCM 31522 / CIP 106686 / LMG 19005 / NCIMB 14063 / MR-1).